The primary structure comprises 154 residues: Fimbrial protein (154 aa).

Positions 1-6 are cleaved as a propeptide — leader sequence; the sequence is MNAQKG. An N-methylphenylalanine modification is found at F7. A helical membrane pass occupies residues 7–29; that stretch reads FTLIELMIVIAIIGILAAIALPA.

It belongs to the N-Me-Phe pilin family. As to quaternary structure, the pili are polar flexible filaments of about 5.4 nanometers diameter and 2.5 micrometers average length; they consist of only a single polypeptide chain arranged in a helical configuration of five subunits per turn in the assembled pilus.

The protein resides in the fimbrium. It is found in the membrane. This is Fimbrial protein (tfpA) from Moraxella nonliquefaciens.